The sequence spans 464 residues: tRNA-2-methylthio-N(6)-dimethylallyladenosine synthase (464 aa).

Residues 19-135 (GSYWITTFGC…LENLLGKVDL (117 aa)) form the MTTase N-terminal domain. [4Fe-4S] cluster contacts are provided by C28, C64, C98, C170, C174, and C177. One can recognise a Radical SAM core domain in the interval 156–394 (RESSICGWVN…DLVEKTARSR (239 aa)). Residues 396-464 (QRYIDNIESV…PFSLTGELSL (69 aa)) enclose the TRAM domain.

The protein belongs to the methylthiotransferase family. MiaB subfamily. As to quaternary structure, monomer. [4Fe-4S] cluster is required as a cofactor.

The protein localises to the cytoplasm. The catalysed reaction is N(6)-dimethylallyladenosine(37) in tRNA + (sulfur carrier)-SH + AH2 + 2 S-adenosyl-L-methionine = 2-methylsulfanyl-N(6)-dimethylallyladenosine(37) in tRNA + (sulfur carrier)-H + 5'-deoxyadenosine + L-methionine + A + S-adenosyl-L-homocysteine + 2 H(+). In terms of biological role, catalyzes the methylthiolation of N6-(dimethylallyl)adenosine (i(6)A), leading to the formation of 2-methylthio-N6-(dimethylallyl)adenosine (ms(2)i(6)A) at position 37 in tRNAs that read codons beginning with uridine. The polypeptide is tRNA-2-methylthio-N(6)-dimethylallyladenosine synthase (Prochlorococcus marinus (strain MIT 9301)).